The sequence spans 352 residues: 4-hydroxy-3-methylbut-2-en-1-yl diphosphate synthase (flavodoxin) (352 aa).

[4Fe-4S] cluster-binding residues include cysteine 265, cysteine 268, cysteine 300, and glutamate 307.

It belongs to the IspG family. [4Fe-4S] cluster is required as a cofactor.

The enzyme catalyses (2E)-4-hydroxy-3-methylbut-2-enyl diphosphate + oxidized [flavodoxin] + H2O + 2 H(+) = 2-C-methyl-D-erythritol 2,4-cyclic diphosphate + reduced [flavodoxin]. It functions in the pathway isoprenoid biosynthesis; isopentenyl diphosphate biosynthesis via DXP pathway; isopentenyl diphosphate from 1-deoxy-D-xylulose 5-phosphate: step 5/6. Converts 2C-methyl-D-erythritol 2,4-cyclodiphosphate (ME-2,4cPP) into 1-hydroxy-2-methyl-2-(E)-butenyl 4-diphosphate. This is 4-hydroxy-3-methylbut-2-en-1-yl diphosphate synthase (flavodoxin) from Persephonella marina (strain DSM 14350 / EX-H1).